A 292-amino-acid chain; its full sequence is ATP synthase subunit a (292 aa).

The next 6 membrane-spanning stretches (helical) occupy residues 37–57 (IDSV…FWLC), 96–116 (FIAP…AMDM), 144–164 (VVPT…LVLC), 192–212 (PVFA…EYVA), 230–250 (LVFM…SGVL), and 263–283 (AIFH…LALI).

This sequence belongs to the ATPase A chain family. In terms of assembly, F-type ATPases have 2 components, CF(1) - the catalytic core - and CF(0) - the membrane proton channel. CF(1) has five subunits: alpha(3), beta(3), gamma(1), delta(1), epsilon(1). CF(0) has three main subunits: a(1), b(2) and c(9-12). The alpha and beta chains form an alternating ring which encloses part of the gamma chain. CF(1) is attached to CF(0) by a central stalk formed by the gamma and epsilon chains, while a peripheral stalk is formed by the delta and b chains.

Its subcellular location is the cell inner membrane. Its function is as follows. Key component of the proton channel; it plays a direct role in the translocation of protons across the membrane. The polypeptide is ATP synthase subunit a (Paracidovorax citrulli (strain AAC00-1) (Acidovorax citrulli)).